The chain runs to 87 residues: Toxin Cll5b (87 aa).

Residues 1-19 form the signal peptide; sequence MNSLLMITACLAEIGTVWA. Positions 20–85 constitute an LCN-type CS-alpha/beta domain; the sequence is KEGYLVNKST…TYPLPNKSCS (66 aa). Cystine bridges form between C31-C84, C35-C60, C44-C65, and C48-C67. A propeptide spans 86–87 (removed by a carboxypeptidase); the sequence is KK.

The protein belongs to the long (4 C-C) scorpion toxin superfamily. Sodium channel inhibitor family. Beta subfamily. As to expression, expressed by the venom gland.

It localises to the secreted. Its function is as follows. Beta toxins bind voltage-independently at site-4 of sodium channels (Nav) and shift the voltage of activation toward more negative potentials thereby affecting sodium channel activation and promoting spontaneous and repetitive firing. This chain is Toxin Cll5b, found in Centruroides limpidus (Mexican scorpion).